A 94-amino-acid chain; its full sequence is MNIKPLGDKVVIKKVEAEDKTKSGIVLPGSAKEQPQMAEVVAVGPGGVVEGKEIIMELKVGDKVIFSKYAGTEVKLDGEEYTILRQNDILAVVE.

This sequence belongs to the GroES chaperonin family. As to quaternary structure, heptamer of 7 subunits arranged in a ring. Interacts with the chaperonin GroEL.

It localises to the cytoplasm. Together with the chaperonin GroEL, plays an essential role in assisting protein folding. The GroEL-GroES system forms a nano-cage that allows encapsulation of the non-native substrate proteins and provides a physical environment optimized to promote and accelerate protein folding. GroES binds to the apical surface of the GroEL ring, thereby capping the opening of the GroEL channel. The polypeptide is Co-chaperonin GroES (Alkaliphilus metalliredigens (strain QYMF)).